The following is a 58-amino-acid chain: Attractin (58 aa).

Disulfide bonds link Cys-4-Cys-41, Cys-13-Cys-33, and Cys-20-Cys-26. N-linked (GlcNAc...) asparagine glycosylation is present at Asn-8.

As to expression, produced by the albumen gland of the egg cordons.

The protein localises to the secreted. Functionally, water-borne pheromone that attract the marine mollusk Aplysia into breeding aggregations and coordinate male and female reproductive behavior within the aggregation. The chain is Attractin (ATT) from Aplysia fasciata (Mottled sea hare).